Reading from the N-terminus, the 324-residue chain is Glyoxylate/hydroxypyruvate reductase B (324 aa).

Residues R237 and E266 contribute to the active site. H285 (proton donor) is an active-site residue.

This sequence belongs to the D-isomer specific 2-hydroxyacid dehydrogenase family. GhrB subfamily. As to quaternary structure, homodimer.

It localises to the cytoplasm. It carries out the reaction glycolate + NADP(+) = glyoxylate + NADPH + H(+). The catalysed reaction is (R)-glycerate + NAD(+) = 3-hydroxypyruvate + NADH + H(+). The enzyme catalyses (R)-glycerate + NADP(+) = 3-hydroxypyruvate + NADPH + H(+). Catalyzes the NADPH-dependent reduction of glyoxylate and hydroxypyruvate into glycolate and glycerate, respectively. This Salmonella schwarzengrund (strain CVM19633) protein is Glyoxylate/hydroxypyruvate reductase B.